The sequence spans 215 residues: Pentapeptide repeat protein QnrB4 (215 aa).

Pentapeptide repeat domains lie at 25–104 (TFFN…SFMN) and 117–191 (ITNT…RGVD).

This sequence belongs to the pentapeptide repeat protein family.

Its function is as follows. Probably plays a role in resistance to quinolone antibiotics. Only inhibits ATP-dependent DNA supercoiling by E.coli gyrase at high concentration (30 uM). Protects E.coli gyrase supercoiling activity from inhibition by fluoroquinolones (ciprofloxacin) at 0.1 uM, does not protect M.tuberculosis gyrase activity. The polypeptide is Pentapeptide repeat protein QnrB4 (Escherichia coli).